The chain runs to 122 residues: Large ribosomal subunit protein uL14 (122 aa).

It belongs to the universal ribosomal protein uL14 family. As to quaternary structure, part of the 50S ribosomal subunit. Forms a cluster with proteins L3 and L19. In the 70S ribosome, L14 and L19 interact and together make contacts with the 16S rRNA in bridges B5 and B8.

Binds to 23S rRNA. Forms part of two intersubunit bridges in the 70S ribosome. The polypeptide is Large ribosomal subunit protein uL14 (Acinetobacter baumannii (strain AB307-0294)).